A 207-amino-acid chain; its full sequence is Lipid A acyltransferase PagP (207 aa).

Residues M1–A24 form the signal peptide. Catalysis depends on residues H79, D122, and S123.

The protein belongs to the lipid A palmitoyltransferase family. In terms of assembly, homodimer.

The protein resides in the cell outer membrane. It carries out the reaction a lipid A + a 1,2-diacyl-sn-glycero-3-phosphocholine = a hepta-acyl lipid A + a 2-acyl-sn-glycero-3-phosphocholine. It catalyses the reaction a lipid IVA + a 1,2-diacyl-sn-glycero-3-phosphocholine = a lipid IVB + a 2-acyl-sn-glycero-3-phosphocholine. The catalysed reaction is a lipid IIA + a 1,2-diacyl-sn-glycero-3-phosphocholine = a lipid IIB + a 2-acyl-sn-glycero-3-phosphocholine. Its function is as follows. Transfers a fatty acid residue from the sn-1 position of a phospholipid to the N-linked hydroxyfatty acid chain on the proximal unit of lipid A or its precursors. This is Lipid A acyltransferase PagP from Photorhabdus asymbiotica subsp. asymbiotica (strain ATCC 43949 / 3105-77) (Xenorhabdus luminescens (strain 2)).